A 172-amino-acid chain; its full sequence is Large ribosomal subunit protein uL10 (172 aa).

Belongs to the universal ribosomal protein uL10 family. As to quaternary structure, part of the ribosomal stalk of the 50S ribosomal subunit. The N-terminus interacts with L11 and the large rRNA to form the base of the stalk. The C-terminus forms an elongated spine to which L12 dimers bind in a sequential fashion forming a multimeric L10(L12)X complex.

In terms of biological role, forms part of the ribosomal stalk, playing a central role in the interaction of the ribosome with GTP-bound translation factors. This chain is Large ribosomal subunit protein uL10, found in Nitrobacter winogradskyi (strain ATCC 25391 / DSM 10237 / CIP 104748 / NCIMB 11846 / Nb-255).